The following is a 777-amino-acid chain: Cullin-3 (777 aa).

The tract at residues 568–596 is disordered; that stretch reads YPPPKASMSNEENGPGPSSSGESMKERKP. Residues 576–589 are compositionally biased toward low complexity; the sequence is SNEENGPGPSSSGE. Positions 707–769 constitute a Cullin neddylation domain; the sequence is DRKLEVEAAI…REYLARDEHD (63 aa). K721 participates in a covalent cross-link: Glycyl lysine isopeptide (Lys-Gly) (interchain with G-Cter in NEDD8).

This sequence belongs to the cullin family. In terms of assembly, probable component of multiple cullin-RING-based BCB (BTB-CUL3-BTB) E3 ubiquitin-protein ligase complexes formed by cul-3, rbx-1 and a variable BTB domain-containing protein acting as both, adapter to cullin and substrate recognition component. Interacts with bath-15, bath-40, bath-41, bath-42, C17F4.8, tag-303, D2045.8, F57C2.1, ZC239.15 and B0281.5. Interacts with mel-26 (via BTB domain). Interacts with dcn-1. Post-translationally, neddylated. Deneddylated via its interaction with the COP9 signalosome (CSN) complex.

The protein resides in the cytoplasm. It is found in the nucleus. It participates in protein modification; protein ubiquitination. Its function is as follows. Probable core component of multiple cullin-RING-based BCB (BTB-CUL3-BTB) E3 ubiquitin-protein ligase complexes which mediate the ubiquitination and subsequent proteasomal degradation of target proteins. Probably acts as a scaffold protein which may contribute to catalysis through positioning of the substrate and the ubiquitin-conjugating enzyme. Required to target mei-3/katanin for degradation at the meiosis to mitosis transition via its neddylation and deneddylation. Functions in ubiquitin-mediated degradation of CKIs to target cki-1 for degradation. Regulates microtubule stability in the early embryo. In body wall muscles, involved in the organization of myosin thick filaments, likely by regulating the degradation of microtubule severing protein mei-1 downstream of unc-89. Together with spop-1, may promote the ubiquitination and proteasomal degradation of target bromodomain-containing proteins such as bet-1. The protein is Cullin-3 of Caenorhabditis elegans.